The following is a 111-amino-acid chain: Nucleoid-associated protein Tmel_0542 (111 aa).

It belongs to the YbaB/EbfC family. In terms of assembly, homodimer.

It localises to the cytoplasm. The protein resides in the nucleoid. Its function is as follows. Binds to DNA and alters its conformation. May be involved in regulation of gene expression, nucleoid organization and DNA protection. In Thermosipho melanesiensis (strain DSM 12029 / CIP 104789 / BI429), this protein is Nucleoid-associated protein Tmel_0542.